We begin with the raw amino-acid sequence, 357 residues long: Histidinol-phosphate aminotransferase (357 aa).

N6-(pyridoxal phosphate)lysine is present on Lys218.

This sequence belongs to the class-II pyridoxal-phosphate-dependent aminotransferase family. Histidinol-phosphate aminotransferase subfamily. Homodimer. Pyridoxal 5'-phosphate is required as a cofactor.

The catalysed reaction is L-histidinol phosphate + 2-oxoglutarate = 3-(imidazol-4-yl)-2-oxopropyl phosphate + L-glutamate. It participates in amino-acid biosynthesis; L-histidine biosynthesis; L-histidine from 5-phospho-alpha-D-ribose 1-diphosphate: step 7/9. The polypeptide is Histidinol-phosphate aminotransferase (Prosthecochloris aestuarii (strain DSM 271 / SK 413)).